A 112-amino-acid polypeptide reads, in one-letter code: U15-hexatoxin-Hi1a (112 aa).

An N-terminal signal peptide occupies residues 1-18 (MNTLIAFAVLLLLSTTLG). A propeptide spanning residues 19–73 (DTDDKVSHEEIQERKELSGISEELLLQQLEAVEAALMEKERLEEMEEDGNSREKR) is cleaved from the precursor. Intrachain disulfides connect Cys-74–Cys-88, Cys-81–Cys-93, and Cys-87–Cys-107.

This sequence belongs to the neurotoxin 14 (magi-1) family. 08 (Ltx-4) subfamily. In terms of tissue distribution, expressed by the venom gland.

Its subcellular location is the secreted. Probable ion channel inhibitor. This chain is U15-hexatoxin-Hi1a, found in Hadronyche infensa (Fraser island funnel-web spider).